The primary structure comprises 198 residues: Autophagy-related protein 33 (198 aa).

The next 3 helical transmembrane spans lie at 17–37, 60–80, and 86–106; these read VSLG…LPAL, PVLA…FLAP, and PYLL…ILIP. The segment at 111–147 is disordered; the sequence is APRRTASSAPRKSSRAKMEASYEVLGDAHSEPASDED. Residues 112-121 show a composition bias toward low complexity; that stretch reads PRRTASSAPR. The segment covering 126 to 142 has biased composition (basic and acidic residues); sequence AKMEASYEVLGDAHSEP. The chain crosses the membrane as a helical span at residues 171–191; that stretch reads TAISALGFAMAVVGIWGDGAP.

This sequence belongs to the ATG33 family.

The protein localises to the mitochondrion membrane. In terms of biological role, involved in the selective degradation of mitochondria via autophagy during starvation and at post-log phase. Autophagy is required for proper vegetative growth, asexual/sexual reproduction, and full virulence. Autophagy is particularly involved in the biosynthesis of deoxynivalenol (DON), an important virulence determinant. The chain is Autophagy-related protein 33 from Gibberella zeae (strain ATCC MYA-4620 / CBS 123657 / FGSC 9075 / NRRL 31084 / PH-1) (Wheat head blight fungus).